The chain runs to 130 residues: Small ribosomal subunit protein uS9 (130 aa).

The segment at R109–R130 is disordered.

This sequence belongs to the universal ribosomal protein uS9 family.

This Nitratidesulfovibrio vulgaris (strain DSM 19637 / Miyazaki F) (Desulfovibrio vulgaris) protein is Small ribosomal subunit protein uS9.